Here is a 519-residue protein sequence, read N- to C-terminus: Acetylcholine receptor subunit gamma (519 aa).

Positions 1 to 22 (MCGGQRPLFLLPLLAVCLGAKG) are cleaved as a signal peptide. Over 23–240 (RNQEERLLGD…VVFYLLIQRK (218 aa)) the chain is Extracellular. N-linked (GlcNAc...) asparagine glycans are attached at residues N52 and N163. C150 and C164 form a disulfide bridge. The next 3 helical transmembrane spans lie at 241 to 265 (PLFY…IYFL), 274 to 292 (CTVA…FLVA), and 308 to 329 (YLTF…VLNV). Over 330–476 (SLRSPHTHSM…WFLVGRVLDR (147 aa)) the chain is Cytoplasmic. A helical transmembrane segment spans residues 477 to 497 (VCFLAMLSLFVCGTAGIFLMA).

It belongs to the ligand-gated ion channel (TC 1.A.9) family. Acetylcholine receptor (TC 1.A.9.1) subfamily. Gamma/CHRNG sub-subfamily. As to quaternary structure, pentamer of two alpha chains, and one each of the beta, delta, and gamma (in immature muscle) or epsilon (in mature muscle) chains.

It is found in the postsynaptic cell membrane. Its subcellular location is the cell membrane. The catalysed reaction is K(+)(in) = K(+)(out). It catalyses the reaction Na(+)(in) = Na(+)(out). After binding acetylcholine, the AChR responds by an extensive change in conformation that affects all subunits and leads to opening of an ion-conducting channel across the plasma membrane. The polypeptide is Acetylcholine receptor subunit gamma (CHRNG) (Bos taurus (Bovine)).